Here is a 264-residue protein sequence, read N- to C-terminus: Small ribosomal subunit protein uS2 (264 aa).

A disordered region spans residues 228-264 (QLDAEDDYEDYDGSEYDDDYEETEYTDAVIPDEETEE). A compositionally biased stretch (acidic residues) spans 230–264 (DAEDDYEDYDGSEYDDDYEETEYTDAVIPDEETEE).

This sequence belongs to the universal ribosomal protein uS2 family.

The polypeptide is Small ribosomal subunit protein uS2 (Nostoc punctiforme (strain ATCC 29133 / PCC 73102)).